A 1368-amino-acid polypeptide reads, in one-letter code: DNA-directed RNA polymerase subunit beta (1368 aa).

The protein belongs to the RNA polymerase beta chain family. In terms of assembly, the RNAP catalytic core consists of 2 alpha, 1 beta, 1 beta' and 1 omega subunit. When a sigma factor is associated with the core the holoenzyme is formed, which can initiate transcription.

The catalysed reaction is RNA(n) + a ribonucleoside 5'-triphosphate = RNA(n+1) + diphosphate. Its function is as follows. DNA-dependent RNA polymerase catalyzes the transcription of DNA into RNA using the four ribonucleoside triphosphates as substrates. This Burkholderia lata (strain ATCC 17760 / DSM 23089 / LMG 22485 / NCIMB 9086 / R18194 / 383) protein is DNA-directed RNA polymerase subunit beta.